Here is a 176-residue protein sequence, read N- to C-terminus: bZIP transcription factor 8 (176 aa).

The interval 44 to 101 (PNTSGGSDESMSDGSKIDPKRSPKYLEKRMKNNEAAKKSRASRKHREQKNQTENELLK) is disordered. Low complexity predominate over residues 47–57 (SGGSDESMSDG). The segment covering 58-80 (SKIDPKRSPKYLEKRMKNNEAAK) has biased composition (basic and acidic residues). Residues 65 to 128 (SPKYLEKRMK…AQMQITIRDM (64 aa)) form the bZIP domain. Residues 67 to 92 (KYLEKRMKNNEAAKKSRASRKHREQK) are basic motif. Residues 81–90 (KSRASRKHRE) show a composition bias toward basic residues. The span at 91–101 (QKNQTENELLK) shows a compositional bias: basic and acidic residues. The tract at residues 100–107 (LKRKNAAL) is leucine-zipper.

The protein belongs to the bZIP family.

The protein is bZIP transcription factor 8 (zip-8) of Caenorhabditis elegans.